Consider the following 587-residue polypeptide: Cyclic GMP-AMP synthase-like receptor (587 aa).

Disordered regions lie at residues 26–48 (IHPS…RRDD) and 77–229 (TRMH…DRPL). 3 stretches are compositionally biased toward basic and acidic residues: residues 95–138 (TRDR…RDSL), 150–185 (DGAR…RESL), and 204–228 (PESR…HDRP). Mg(2+) is bound by residues E307, D309, and D409.

The protein belongs to the mab-21 family. Requires Mg(2+) as cofactor. It depends on Mn(2+) as a cofactor.

The catalysed reaction is UTP + ATP = 2',3'-cUAMP + 2 diphosphate. Functionally, nucleotidyltransferase that catalyzes the formation of cyclic UMP-AMP (2',3'-cUAMP) from ATP and UTP and plays a key role in innate immunity. Acts as a key sensor of double-stranded DNA (dsDNA), the presence of dsDNA in the cytoplasm being a danger signal that triggers the immune responses. Directly binds dsDNA, activating the nucleotidyltransferase activity, leading to synthesis of 2',3'-cUAMP, a second messenger that binds to and activates Sting, thereby triggering the immune response via activation of the NF-kappa-B transcription factor. This chain is Cyclic GMP-AMP synthase-like receptor, found in Magallana gigas (Pacific oyster).